The primary structure comprises 364 residues: Protein PTOV1 homolog (364 aa).

A disordered region spans residues 187–207 (AKRKPGVKTPKQPQPEEPPPV).

Belongs to the Mediator complex subunit 25 family. PTOV1 subfamily.

The sequence is that of Protein PTOV1 homolog from Drosophila melanogaster (Fruit fly).